Reading from the N-terminus, the 337-residue chain is Putative carboxypeptidase TP_0688 (337 aa).

Serine 118 serves as the catalytic Nucleophile. Residues glutamate 234 and histidine 302 each act as charge relay system in the active site.

The protein belongs to the peptidase S66 family.

The chain is Putative carboxypeptidase TP_0688 from Treponema pallidum (strain Nichols).